Here is a 379-residue protein sequence, read N- to C-terminus: Cytochrome b (379 aa).

The next 4 helical transmembrane spans lie at 33–53 (FGSL…FLAM), 77–98 (WTIR…FIHV), 113–133 (WNVG…GYVL), and 178–198 (FFAL…IHLL). Residues H83 and H97 each contribute to the heme b site. Heme b is bound by residues H182 and H196. H201 is an a ubiquinone binding site. 4 consecutive transmembrane segments (helical) span residues 226–246 (TKDF…TLFY), 288–308 (LGGV…PLLQ), 320–340 (LSQF…WIGG), and 347–367 (FITI…LIMP).

It belongs to the cytochrome b family. The cytochrome bc1 complex contains 11 subunits: 3 respiratory subunits (MT-CYB, CYC1 and UQCRFS1), 2 core proteins (UQCRC1 and UQCRC2) and 6 low-molecular weight proteins (UQCRH/QCR6, UQCRB/QCR7, UQCRQ/QCR8, UQCR10/QCR9, UQCR11/QCR10 and a cleavage product of UQCRFS1). This cytochrome bc1 complex then forms a dimer. The cofactor is heme b.

Its subcellular location is the mitochondrion inner membrane. Component of the ubiquinol-cytochrome c reductase complex (complex III or cytochrome b-c1 complex) that is part of the mitochondrial respiratory chain. The b-c1 complex mediates electron transfer from ubiquinol to cytochrome c. Contributes to the generation of a proton gradient across the mitochondrial membrane that is then used for ATP synthesis. The chain is Cytochrome b (MT-CYB) from Lepilemur edwardsi (Milne-Edwards's sportive lemur).